The sequence spans 90 residues: ATP synthase subunit e, mitochondrial (90 aa).

N-acetylserine is present on S2. A helical membrane pass occupies residues 7–23; the sequence is VLRWSALGAGVVYGFVH.

F-type ATP synthases have 2 components, the catalytic core F(1) and the membrane-embedded component F(0), linked together by a central stalk and a peripheral stalk. The central stalk, also called rotor shaft, is often seen as part of F(1). The peripheral stalk is seen as part of F(0). F(0) contains the membrane channel next to the rotor. F-type ATP synthases form dimers but each monomer functions independently in ATP generation. The dimer consists of 17 different polypeptides: ATP1 (subunit alpha, 3 molecules per monomer, part of F(1)), ATP2 (subunit beta, 3 copies per monomer, part of F(1)), ATP3 (subunit gamma, part of the central stalk), ATP4 (subunit b, part of the peripheral stalk), ATP5/OSCP (subunit 5/OSCP, part of the peripheral stalk), ATP6 (subunit a, part of the peripheral stalk), ATP7 (subunit d, part of the peripheral stalk), ATP8 (subunit 8, part of the peripheral stalk), OLI1 (subunit c, part of the rotor, 10 molecules per monomer), ATP14 (subunit h, part of the peripheral stalk), ATP15 (subunit epsilon, part of the central stalk), ATP16 (subunit delta, part of the central stalk), ATP17 (subunit f, part of the peripheral stalk), ATP18 (subunit i/j, part of the peripheral stalk), ATP19 (subunit k, dimer-specific, at interface between monomers), ATP20 (subunit g, at interface between monomers), TIM11 (subunit e, at interface between monomers).

The protein localises to the mitochondrion inner membrane. Functionally, mitochondrial membrane ATP synthase (F(1)F(0) ATP synthase or Complex V) produces ATP from ADP in the presence of a proton gradient across the membrane which is generated by electron transport complexes of the respiratory chain. F-type ATP synthases consist of two structural domains, F(1) - containing the extramembraneous catalytic core, and F(0) - containing the membrane proton channel, linked together by a central stalk and a peripheral stalk. During catalysis, ATP synthesis in the catalytic domain of F(1) is coupled via a rotary mechanism of the central stalk subunits to proton translocation. Part of the complex F(0) domain. Minor subunit located with subunit a/ATP6 in the membrane. Together with subunit g/ATP20, probably contributes to membrane curvature at the site of the ATP synthase dimer, ultimately contributing to formation of cristae. This chain is ATP synthase subunit e, mitochondrial, found in Yarrowia lipolytica (strain CLIB 122 / E 150) (Yeast).